A 490-amino-acid chain; its full sequence is Adenylosuccinate lyase (490 aa).

Position 2 is an N-acetylalanine (alanine 2). Residues 26–27, 91–93, and 117–118 each bind substrate; these read RY, RHD, and TS. Lysine 153 carries the N6-acetyllysine modification. Histidine 165 acts as the Proton donor/acceptor in catalysis. Glutamine 247 contributes to the substrate binding site. The active-site Proton donor/acceptor is serine 295. Lysine 301 carries the N6-acetyllysine modification. Positions 309, 335, 340, and 344 each coordinate substrate. A Glycyl lysine isopeptide (Lys-Gly) (interchain with G-Cter in SUMO1) cross-link involves residue lysine 421.

Belongs to the lyase 1 family. Adenylosuccinate lyase subfamily. Homotetramer. Residues from neighboring subunits contribute catalytic and substrate-binding residues to each active site.

The enzyme catalyses N(6)-(1,2-dicarboxyethyl)-AMP = fumarate + AMP. The catalysed reaction is (2S)-2-[5-amino-1-(5-phospho-beta-D-ribosyl)imidazole-4-carboxamido]succinate = 5-amino-1-(5-phospho-beta-D-ribosyl)imidazole-4-carboxamide + fumarate. It functions in the pathway purine metabolism; AMP biosynthesis via de novo pathway; AMP from IMP: step 2/2. The protein operates within purine metabolism; IMP biosynthesis via de novo pathway; 5-amino-1-(5-phospho-D-ribosyl)imidazole-4-carboxamide from 5-amino-1-(5-phospho-D-ribosyl)imidazole-4-carboxylate: step 2/2. Catalyzes two non-sequential steps in de novo AMP synthesis: converts (S)-2-(5-amino-1-(5-phospho-D-ribosyl)imidazole-4-carboxamido)succinate (SAICAR) to fumarate plus 5-amino-1-(5-phospho-D-ribosyl)imidazole-4-carboxamide, and thereby also contributes to de novo IMP synthesis, and converts succinyladenosine monophosphate (SAMP) to AMP and fumarate. This Bos taurus (Bovine) protein is Adenylosuccinate lyase (ADSL).